A 309-amino-acid chain; its full sequence is Elongation factor Ts (309 aa).

The tract at residues 82–85 (TDFV) is involved in Mg(2+) ion dislocation from EF-Tu.

This sequence belongs to the EF-Ts family.

The protein resides in the cytoplasm. Functionally, associates with the EF-Tu.GDP complex and induces the exchange of GDP to GTP. It remains bound to the aminoacyl-tRNA.EF-Tu.GTP complex up to the GTP hydrolysis stage on the ribosome. In Rickettsia akari (strain Hartford), this protein is Elongation factor Ts.